The sequence spans 952 residues: Inactive atromentin synthetase invA6 (952 aa).

Residues 58–462 (DSSVQTRSFS…NGRIKDTVIV (405 aa)) form an adenylation (A) domain region. In terms of domain architecture, Carrier spans 594 to 672 (APSTETEKTL…SLAKYVDSLV (79 aa)). The interval 599 to 669 (TEKTLGRLYA…VISSLAKYVD (71 aa)) is thiolation and peptide carrier (T) domain. S631 bears the O-(pantetheine 4'-phosphoryl)serine mark. A thioesterase (TE) domain region spans residues 695 to 939 (PIFMVHPGIG…LMDFDHVSGF (245 aa)).

The protein belongs to the ATP-dependent AMP-binding enzyme family.

In terms of biological role, inactive atromentin synthetase homolog. Does not accept 4-hydroxyphenylpyruvate (4-HPP) as substrate. Both the adenylation (A) and the thioesterase (TE) domain of the invA6 enzyme are inactive. This is Inactive atromentin synthetase invA6 (invA6) from Paxillus involutus (Naked brimcap).